Consider the following 193-residue polypeptide: dITP/XTP pyrophosphatase (193 aa).

7-12 (SENENK) contributes to the substrate binding site. The Proton acceptor role is filled by aspartate 65. Aspartate 65 contacts Mg(2+). Substrate contacts are provided by residues serine 66, 144–147 (FGYD), lysine 167, and 172–173 (HR).

It belongs to the HAM1 NTPase family. In terms of assembly, homodimer. It depends on Mg(2+) as a cofactor.

The catalysed reaction is XTP + H2O = XMP + diphosphate + H(+). It catalyses the reaction dITP + H2O = dIMP + diphosphate + H(+). It carries out the reaction ITP + H2O = IMP + diphosphate + H(+). Pyrophosphatase that catalyzes the hydrolysis of nucleoside triphosphates to their monophosphate derivatives, with a high preference for the non-canonical purine nucleotides XTP (xanthosine triphosphate), dITP (deoxyinosine triphosphate) and ITP. Seems to function as a house-cleaning enzyme that removes non-canonical purine nucleotides from the nucleotide pool, thus preventing their incorporation into DNA/RNA and avoiding chromosomal lesions. The chain is dITP/XTP pyrophosphatase from Tropheryma whipplei (strain Twist) (Whipple's bacillus).